The sequence spans 294 residues: Equatorin (294 aa).

The N-terminal stretch at 1–14 is a signal peptide; it reads MNFILFIFIPGVFS. Topologically, residues 15 to 181 are vesicular; that stretch reads LKSSTLKPTI…QPDLEDLKIK (167 aa). Asn76 is a glycosylation site (N-linked (GlcNAc...) asparagine). The interval 107–126 is disordered; it reads KSTIEEETTTSEPSHKNIQR. N-linked (GlcNAc...) asparagine glycosylation occurs at Asn143. A helical transmembrane segment spans residues 182 to 202; that stretch reads IMLGISLMTLLLFVVLLAFCS. Topologically, residues 203-294 are cytoplasmic; the sequence is ATLYKLRHLS…MHENDESVTR (92 aa).

Interacts with SNAP25. Post-translationally, highly N- and O-glycosylated; contains sialic acid. As to expression, isoform 1 is highly expressed in testis. Isoform 2 is expressed at low levels in skin and blood.

Its subcellular location is the cytoplasmic vesicle. It is found in the secretory vesicle. It localises to the acrosome membrane. The protein resides in the acrosome inner membrane. The protein localises to the acrosome outer membrane. Functionally, acrosomal membrane-anchored protein involved in the process of fertilization and in acrosome biogenesis. This is Equatorin (EQTN) from Homo sapiens (Human).